The following is a 312-amino-acid chain: Pyrimidine-specific ribonucleoside hydrolase RihA (312 aa).

The active site involves histidine 240.

This sequence belongs to the IUNH family. RihA subfamily.

Hydrolyzes cytidine or uridine to ribose and cytosine or uracil, respectively. This chain is Pyrimidine-specific ribonucleoside hydrolase RihA, found in Shewanella woodyi (strain ATCC 51908 / MS32).